A 158-amino-acid polypeptide reads, in one-letter code: Large ribosomal subunit protein uL30 (158 aa).

This sequence belongs to the universal ribosomal protein uL30 family. In terms of assembly, part of the 50S ribosomal subunit.

The chain is Large ribosomal subunit protein uL30 from Saccharolobus islandicus (strain Y.N.15.51 / Yellowstone #2) (Sulfolobus islandicus).